We begin with the raw amino-acid sequence, 160 residues long: UPF0178 protein PLES_56411 (160 aa).

The protein belongs to the UPF0178 family.

The protein is UPF0178 protein PLES_56411 of Pseudomonas aeruginosa (strain LESB58).